The following is a 251-amino-acid chain: Flap endonuclease Xni (251 aa).

Aspartate 104 contacts Mg(2+). The 90-residue stretch at 160 to 249 (VLPRQLPDYW…IDGNLQQLRL (90 aa)) folds into the 5'-3' exonuclease domain. K(+) contacts are provided by leucine 171, alanine 172, proline 180, valine 182, and isoleucine 185. An interaction with DNA region spans residues 184–189 (GIGPKS).

It belongs to the Xni family. It depends on Mg(2+) as a cofactor. The cofactor is K(+).

Has flap endonuclease activity. During DNA replication, flap endonucleases cleave the 5'-overhanging flap structure that is generated by displacement synthesis when DNA polymerase encounters the 5'-end of a downstream Okazaki fragment. The chain is Flap endonuclease Xni from Salmonella choleraesuis (strain SC-B67).